The primary structure comprises 224 residues: Holliday junction branch migration complex subunit RuvA (224 aa).

Residues 1 to 64 (MIGRLSGVLV…EDLLQLYGFP (64 aa)) form a domain I region. The domain II stretch occupies residues 65–143 (TLLEKEWHRL…EVMAMGGTLE (79 aa)). A flexible linker region spans residues 144 to 171 (AALDGVIEDGMAASEGIEPPSAARPAVP). Positions 172 to 224 (SAASDQAGALSALVNLGYGQGEAASAVATAAGEGAVGETDIIRAALRLLAPKG) are domain III.

It belongs to the RuvA family. In terms of assembly, homotetramer. Forms an RuvA(8)-RuvB(12)-Holliday junction (HJ) complex. HJ DNA is sandwiched between 2 RuvA tetramers; dsDNA enters through RuvA and exits via RuvB. An RuvB hexamer assembles on each DNA strand where it exits the tetramer. Each RuvB hexamer is contacted by two RuvA subunits (via domain III) on 2 adjacent RuvB subunits; this complex drives branch migration. In the full resolvosome a probable DNA-RuvA(4)-RuvB(12)-RuvC(2) complex forms which resolves the HJ.

It is found in the cytoplasm. In terms of biological role, the RuvA-RuvB-RuvC complex processes Holliday junction (HJ) DNA during genetic recombination and DNA repair, while the RuvA-RuvB complex plays an important role in the rescue of blocked DNA replication forks via replication fork reversal (RFR). RuvA specifically binds to HJ cruciform DNA, conferring on it an open structure. The RuvB hexamer acts as an ATP-dependent pump, pulling dsDNA into and through the RuvAB complex. HJ branch migration allows RuvC to scan DNA until it finds its consensus sequence, where it cleaves and resolves the cruciform DNA. The polypeptide is Holliday junction branch migration complex subunit RuvA (Dinoroseobacter shibae (strain DSM 16493 / NCIMB 14021 / DFL 12)).